A 242-amino-acid polypeptide reads, in one-letter code: Biosynthetic peptidoglycan transglycosylase (242 aa).

A helical membrane pass occupies residues 12-32; the sequence is LLLWLIALSVLLVLLLRWVPP.

This sequence belongs to the glycosyltransferase 51 family.

The protein localises to the cell inner membrane. It carries out the reaction [GlcNAc-(1-&gt;4)-Mur2Ac(oyl-L-Ala-gamma-D-Glu-L-Lys-D-Ala-D-Ala)](n)-di-trans,octa-cis-undecaprenyl diphosphate + beta-D-GlcNAc-(1-&gt;4)-Mur2Ac(oyl-L-Ala-gamma-D-Glu-L-Lys-D-Ala-D-Ala)-di-trans,octa-cis-undecaprenyl diphosphate = [GlcNAc-(1-&gt;4)-Mur2Ac(oyl-L-Ala-gamma-D-Glu-L-Lys-D-Ala-D-Ala)](n+1)-di-trans,octa-cis-undecaprenyl diphosphate + di-trans,octa-cis-undecaprenyl diphosphate + H(+). It participates in cell wall biogenesis; peptidoglycan biosynthesis. In terms of biological role, peptidoglycan polymerase that catalyzes glycan chain elongation from lipid-linked precursors. This is Biosynthetic peptidoglycan transglycosylase from Stutzerimonas stutzeri (strain A1501) (Pseudomonas stutzeri).